Reading from the N-terminus, the 333-residue chain is Glycerol-3-phosphate dehydrogenase [NAD(P)+] (333 aa).

Residues Ser-10, Trp-11, His-31, Arg-32, and Lys-105 each contribute to the NADPH site. Sn-glycerol 3-phosphate contacts are provided by Lys-105, Gly-136, and Ser-138. Residue Ala-140 participates in NADPH binding. Lys-191, Asp-244, Ser-254, Arg-255, and Asn-256 together coordinate sn-glycerol 3-phosphate. The Proton acceptor role is filled by Lys-191. Arg-255 serves as a coordination point for NADPH. NADPH contacts are provided by Val-279 and Glu-281.

Belongs to the NAD-dependent glycerol-3-phosphate dehydrogenase family.

The protein localises to the cytoplasm. The catalysed reaction is sn-glycerol 3-phosphate + NAD(+) = dihydroxyacetone phosphate + NADH + H(+). It catalyses the reaction sn-glycerol 3-phosphate + NADP(+) = dihydroxyacetone phosphate + NADPH + H(+). Its pathway is membrane lipid metabolism; glycerophospholipid metabolism. Catalyzes the reduction of the glycolytic intermediate dihydroxyacetone phosphate (DHAP) to sn-glycerol 3-phosphate (G3P), the key precursor for phospholipid synthesis. This Chlorobium limicola (strain DSM 245 / NBRC 103803 / 6330) protein is Glycerol-3-phosphate dehydrogenase [NAD(P)+].